Reading from the N-terminus, the 122-residue chain is Protein 7a (122 aa).

The signal sequence occupies residues 1–15; that stretch reads MKIILFLTLIALASS. In terms of domain architecture, X4e spans 16 to 81; the sequence is ELYHYQECVR…RHTYQLRARS (66 aa). The Virion surface portion of the chain corresponds to 16-96; the sequence is ELYHYQECVR…FTRQEEVHQE (81 aa). Cystine bridges form between C23–C58 and C35–C67. Residues 97–117 form a helical membrane-spanning segment; sequence LYSPLFLIVAALVFIILCFTI. Residues 118-122 are Intravirion-facing; that stretch reads KRKTE. The Di-lysine motif motif lies at 118 to 122; it reads KRKTE.

Interacts with the spike glycoprotein, M protein, E protein and the accessory protein 3.

The protein localises to the virion. The protein resides in the host endoplasmic reticulum membrane. It is found in the host endoplasmic reticulum-Golgi intermediate compartment membrane. Its subcellular location is the host Golgi apparatus membrane. Non-structural protein which is dispensable for virus replication in cell culture. This is Protein 7a from Rhinolophus macrotis (Big-eared horseshoe bat).